A 938-amino-acid polypeptide reads, in one-letter code: Isoleucine--tRNA ligase (938 aa).

Residues 58-68 (PYANGSIHIGH) carry the 'HIGH' region motif. Residue glutamate 561 participates in L-isoleucyl-5'-AMP binding. The 'KMSKS' region signature appears at 602–606 (KMSKS). Lysine 605 provides a ligand contact to ATP. 4 residues coordinate Zn(2+): cysteine 901, cysteine 904, cysteine 921, and cysteine 924.

This sequence belongs to the class-I aminoacyl-tRNA synthetase family. IleS type 1 subfamily. Monomer. The cofactor is Zn(2+).

It is found in the cytoplasm. The catalysed reaction is tRNA(Ile) + L-isoleucine + ATP = L-isoleucyl-tRNA(Ile) + AMP + diphosphate. Functionally, catalyzes the attachment of isoleucine to tRNA(Ile). As IleRS can inadvertently accommodate and process structurally similar amino acids such as valine, to avoid such errors it has two additional distinct tRNA(Ile)-dependent editing activities. One activity is designated as 'pretransfer' editing and involves the hydrolysis of activated Val-AMP. The other activity is designated 'posttransfer' editing and involves deacylation of mischarged Val-tRNA(Ile). The protein is Isoleucine--tRNA ligase of Erwinia tasmaniensis (strain DSM 17950 / CFBP 7177 / CIP 109463 / NCPPB 4357 / Et1/99).